Here is a 477-residue protein sequence, read N- to C-terminus: UDP-N-acetylmuramate--L-alanine ligase (477 aa).

122 to 128 (GTHGKTT) lines the ATP pocket.

This sequence belongs to the MurCDEF family.

The protein resides in the cytoplasm. It catalyses the reaction UDP-N-acetyl-alpha-D-muramate + L-alanine + ATP = UDP-N-acetyl-alpha-D-muramoyl-L-alanine + ADP + phosphate + H(+). Its pathway is cell wall biogenesis; peptidoglycan biosynthesis. In terms of biological role, cell wall formation. The protein is UDP-N-acetylmuramate--L-alanine ligase of Xylella fastidiosa (strain 9a5c).